Consider the following 976-residue polypeptide: MKLKSVFRSVLKYRKTNLSLLLLITYSIITLLYIFDHERYKLNLPKEDEHPEFNDLLETAWGDLQIITASFHPYTSKENDKVHDYLLKRVLEITGNSSFASVSDDKESERSILFQQQDPFNESSRFSRVTYFESSNILVKLEGKNPEEEGLLLSAHFDSVPTGYGATDDGMGVVSLLANLKYHIKHRPNRTLIFNFNNNEEFGLLGASTYFNHSWSNLTKYVINLEGTGAGGKAVLFRTSDTSTAKIYQQSVKENPFGNSIYQQGFYSRYVRSETDYKIYEENGMRGWDVAFYKPRNLYHTIKDSIQYTSKASLWHMLHTSLQLSAYVASNSLDTADQTPACYFDFIGLKFFVISAKTLFYWNCIFLLVSPVVAIGLYLISRDRMTWKSHSWLSWTRFPLSLAAGIIVQKLFSNDIIRSNPLTFSRNYFWPISAFFTQVIFTSYVLINCSNFFFPCADMKSLSIIELFIILWTILLFTSKLLYSSDYRYTGLYPLSIFFLLSTIAAILRLLALALGMRTRKRLGRECRDHHSNYSSHSQIDMERDGQENLEQPQDQFTSSQDDQASIQDDNVSTTSAGPSHNVDEDHGMDSSSQQHDERVPLLKGSNSMEEGLSTRENSLKLEYTDYAWIIQFLLIVPIPSFILFNSVDVIMDALNHTVQEGSKATFDVLRFGMVGSILIALPILPFFYKVNYITISLTALLFLISASKTLLVHPFTNSNPLKVRFSQNIDLSQGNAASVHVLGREGNFLKPMLQDLPSIKYSSTHINCTSVTNGMELCMYDGMQPNLLSTNGNTNISSMVKVHVLHNNRNSTERSPYEPIVAELLLEVKENRACTLTFESRHQAKSPVREITVYQKKNSAPQKANITKTIKSASGINELQLHKLDFDKETYHIGVQWFPKLLTDGNVEDDKLGTKDELSVSISCYWGEYDSESVVNGTAVRKIPAFDELINYAPLSFSFTNEQKGLVIVKDAIIL.

Over 1–15 the chain is Cytoplasmic; it reads MKLKSVFRSVLKYRK. Residues 16 to 36 traverse the membrane as a helical segment; that stretch reads TNLSLLLLITYSIITLLYIFD. Residues 37 to 359 lie on the Vacuolar side of the membrane; it reads HERYKLNLPK…KFFVISAKTL (323 aa). Residues Asn96 and Asn121 are each glycosylated (N-linked (GlcNAc...) asparagine). Residues His156 and Asp168 each coordinate Zn(2+). An N-linked (GlcNAc...) asparagine glycan is attached at Asn189. The active-site Proton acceptor is the Glu200. Residue Glu201 participates in Zn(2+) binding. Asn212 and Asn217 each carry an N-linked (GlcNAc...) asparagine glycan. Residues Glu226 and His300 each coordinate Zn(2+). The helical transmembrane segment at 360–380 threads the bilayer; the sequence is FYWNCIFLLVSPVVAIGLYLI. At 381–392 the chain is on the cytoplasmic side; the sequence is SRDRMTWKSHSW. A helical membrane pass occupies residues 393-412; sequence LSWTRFPLSLAAGIIVQKLF. At 413–428 the chain is on the vacuolar side; it reads SNDIIRSNPLTFSRNY. The helical transmembrane segment at 429-449 threads the bilayer; that stretch reads FWPISAFFTQVIFTSYVLINC. Residues 450 to 461 are Cytoplasmic-facing; the sequence is SNFFFPCADMKS. Residues 462-482 traverse the membrane as a helical segment; sequence LSIIELFIILWTILLFTSKLL. The Vacuolar segment spans residues 483–496; the sequence is YSSDYRYTGLYPLS. Residues 497–517 traverse the membrane as a helical segment; it reads IFFLLSTIAAILRLLALALGM. The Cytoplasmic portion of the chain corresponds to 518-627; the sequence is RTRKRLGREC…NSLKLEYTDY (110 aa). The segment at 528 to 610 is disordered; the sequence is RDHHSNYSSH…PLLKGSNSME (83 aa). Polar residues predominate over residues 549-558; that stretch reads NLEQPQDQFT. Residues 559–570 are compositionally biased toward low complexity; sequence SSQDDQASIQDD. Over residues 582-601 the composition is skewed to basic and acidic residues; sequence NVDEDHGMDSSSQQHDERVP. Residues 628–648 form a helical membrane-spanning segment; it reads AWIIQFLLIVPIPSFILFNSV. The Vacuolar segment spans residues 649–668; it reads DVIMDALNHTVQEGSKATFD. Asn656 carries N-linked (GlcNAc...) asparagine glycosylation. The chain crosses the membrane as a helical span at residues 669-689; sequence VLRFGMVGSILIALPILPFFY. Residues 690–692 are Cytoplasmic-facing; sequence KVN. Residues 693–713 form a helical membrane-spanning segment; the sequence is YITISLTALLFLISASKTLLV. Residues 714-976 are Vacuolar-facing; the sequence is HPFTNSNPLK…LVIVKDAIIL (263 aa). 5 N-linked (GlcNAc...) asparagine glycosylation sites follow: Asn768, Asn796, Asn811, Asn866, and Asn937.

The protein belongs to the peptidase M28 family. It depends on Zn(2+) as a cofactor.

Its subcellular location is the vacuole membrane. May be involved in vacuolar sorting and osmoregulation. This chain is Vacuolar membrane protease, found in Saccharomyces cerevisiae (strain JAY291) (Baker's yeast).